We begin with the raw amino-acid sequence, 99 residues long: Plastocyanin B'/B'' (99 aa).

Residues 1–99 (IEVLLGSDDG…AGMVGKVTVN (99 aa)) enclose the Plastocyanin-like domain. Positions 37, 84, 87, and 92 each coordinate Cu cation.

The protein belongs to the plastocyanin family. The cofactor is Cu(2+).

Its subcellular location is the plastid. It is found in the chloroplast thylakoid membrane. Participates in electron transfer between P700 and the cytochrome b6-f complex in photosystem I. This Nicotiana tabacum (Common tobacco) protein is Plastocyanin B'/B''.